A 238-amino-acid chain; its full sequence is 3-dehydroquinate dehydratase (238 aa).

3-dehydroquinate-binding positions include 35 to 37 and arginine 70; that span reads ELR. Residue histidine 133 is the Proton donor/acceptor of the active site. Lysine 160 acts as the Schiff-base intermediate with substrate in catalysis. 3-dehydroquinate-binding residues include arginine 202 and glutamine 225.

This sequence belongs to the type-I 3-dehydroquinase family. In terms of assembly, homodimer.

The catalysed reaction is 3-dehydroquinate = 3-dehydroshikimate + H2O. The protein operates within metabolic intermediate biosynthesis; chorismate biosynthesis; chorismate from D-erythrose 4-phosphate and phosphoenolpyruvate: step 3/7. In terms of biological role, involved in the third step of the chorismate pathway, which leads to the biosynthesis of aromatic amino acids. Catalyzes the cis-dehydration of 3-dehydroquinate (DHQ) and introduces the first double bond of the aromatic ring to yield 3-dehydroshikimate. The sequence is that of 3-dehydroquinate dehydratase from Staphylococcus aureus (strain USA300).